We begin with the raw amino-acid sequence, 195 residues long: Protein GrpE (195 aa).

The span at 1-24 shows a compositional bias: polar residues; sequence MSSKEQNTPDEQVSQESEMEQGQQ. The disordered stretch occupies residues 1-40; it reads MSSKEQNTPDEQVSQESEMEQGQQAEAAPETVDVVDPRDE.

This sequence belongs to the GrpE family. As to quaternary structure, homodimer.

The protein resides in the cytoplasm. Participates actively in the response to hyperosmotic and heat shock by preventing the aggregation of stress-denatured proteins, in association with DnaK and GrpE. It is the nucleotide exchange factor for DnaK and may function as a thermosensor. Unfolded proteins bind initially to DnaJ; upon interaction with the DnaJ-bound protein, DnaK hydrolyzes its bound ATP, resulting in the formation of a stable complex. GrpE releases ADP from DnaK; ATP binding to DnaK triggers the release of the substrate protein, thus completing the reaction cycle. Several rounds of ATP-dependent interactions between DnaJ, DnaK and GrpE are required for fully efficient folding. The sequence is that of Protein GrpE from Sodalis glossinidius (strain morsitans).